The sequence spans 211 residues: Large ribosomal subunit protein uL4 (211 aa).

Positions 40–80 are disordered; that stretch reads QQAHSRQGTASTLTRSEVRGGGRKPYKQKGTGRARQGSIRT. The segment covering 41 to 54 has biased composition (polar residues); that stretch reads QAHSRQGTASTLTR. Residues 60 to 71 are compositionally biased toward basic residues; the sequence is GGRKPYKQKGTG.

This sequence belongs to the universal ribosomal protein uL4 family. As to quaternary structure, part of the 50S ribosomal subunit.

Its function is as follows. One of the primary rRNA binding proteins, this protein initially binds near the 5'-end of the 23S rRNA. It is important during the early stages of 50S assembly. It makes multiple contacts with different domains of the 23S rRNA in the assembled 50S subunit and ribosome. Functionally, forms part of the polypeptide exit tunnel. This is Large ribosomal subunit protein uL4 from Prochlorococcus marinus (strain MIT 9211).